Reading from the N-terminus, the 963-residue chain is VPS35 endosomal protein-sorting factor-like (963 aa).

The disordered stretch occupies residues S43–L69. Low complexity predominate over residues S53 to L69. S265 is subject to Phosphoserine. Residues A703–F719 form a helical membrane-spanning segment.

This sequence belongs to the VPS35L family. In terms of assembly, component of the heterotrimeric retriever complex formed by VPS26C, VPS29 and VPS35L. Interacts with VPS29. Interacts with COMMD1, CCDC93 and CCDC22; associates with the CCC (COMMD/CCDC22/CCDC93) complex which contains at least COMMD1 (and possibly other COMM domain-containing proteins), CCDC22 and CCDC93. Interacts with WASHC1, WASHC2A and WASHC2C. Interacts with SNX17 and SNX31.

The protein localises to the membrane. It is found in the endosome. In terms of biological role, acts as a component of the retriever complex. The retriever complex is a heterotrimeric complex related to retromer cargo-selective complex (CSC) and essential for retromer-independent retrieval and recycling of numerous cargos such as integrin alpha-5/beta-1 (ITGA5:ITGB1). The recruitment of the retriever complex to the endosomal membrane involves CCC and WASH complexes. In the endosomes, drives the retrieval and recycling of NxxY-motif-containing cargo proteins by coupling to SNX17, a cargo essential for the homeostatic maintenance of numerous cell surface proteins associated with processes that include cell migration, cell adhesion, nutrient supply and cell signaling. Involved in copper-dependent ATP7A trafficking between the trans-Golgi network and vesicles in the cell periphery; the function is proposed to depend on its association with the CCC complex and cooperation with the WASH complex on early endosomes. Seems not to be required for CCC complex stability. (Microbial infection) The heterotrimeric retriever complex, in collaboration with the CCC complex, mediates the exit of human papillomavirus to the cell surface. The protein is VPS35 endosomal protein-sorting factor-like of Homo sapiens (Human).